Here is an 87-residue protein sequence, read N- to C-terminus: Small ribosomal subunit protein bS20 (87 aa).

Basic residues predominate over residues 1–11; that stretch reads MANHKSALKRI. The tract at residues 1-23 is disordered; the sequence is MANHKSALKRIKQTEKRTERNRH.

This sequence belongs to the bacterial ribosomal protein bS20 family.

Binds directly to 16S ribosomal RNA. The chain is Small ribosomal subunit protein bS20 from Geotalea daltonii (strain DSM 22248 / JCM 15807 / FRC-32) (Geobacter daltonii).